A 657-amino-acid polypeptide reads, in one-letter code: Penicillin-binding protein activator LpoA (657 aa).

Positions 1 to 25 (MLSSTFVRSKAGLVPVILAALILAA) are cleaved as a signal peptide. The N-palmitoyl cysteine moiety is linked to residue Cys26. The S-diacylglycerol cysteine moiety is linked to residue Cys26.

Belongs to the LpoA family. Interacts with PBP1a.

The protein resides in the cell outer membrane. Regulator of peptidoglycan synthesis that is essential for the function of penicillin-binding protein 1A (PBP1a). This is Penicillin-binding protein activator LpoA from Yersinia pestis bv. Antiqua (strain Angola).